The following is an 888-amino-acid chain: Mitogen-activated protein kinase kinase kinase 12 (888 aa).

Over residues methionine 26 to leucine 42 the composition is skewed to basic and acidic residues. The tract at residues methionine 26–arginine 104 is disordered. A phosphothreonine mark is found at threonine 37 and threonine 43. The segment covering serine 64 to proline 75 has biased composition (pro residues). One can recognise a Protein kinase domain in the interval isoleucine 158–isoleucine 399. Residues valine 164–valine 172 and lysine 185 each bind ATP. The active-site Proton acceptor is the aspartate 269. 2 leucine-zipper regions span residues valine 423–leucine 444 and leucine 476–leucine 497. The tract at residues glycine 557 to tryptophan 620 is disordered. The segment covering arginine 572 to serine 584 has biased composition (basic residues). Gly residues predominate over residues glycine 605–valine 615. Serine 640 is subject to Phosphoserine. Disordered stretches follow at residues arginine 654–leucine 731 and threonine 743–proline 888. The segment covering proline 704–arginine 725 has biased composition (gly residues). Acidic residues predominate over residues serine 752–valine 763. 2 stretches are compositionally biased toward polar residues: residues asparagine 776–proline 789 and serine 798–asparagine 812. The segment covering threonine 813–aspartate 823 has biased composition (basic and acidic residues).

This sequence belongs to the protein kinase superfamily. STE Ser/Thr protein kinase family. MAP kinase kinase kinase subfamily. Homodimer. Interacts with MBIP. Requires Mg(2+) as cofactor. In terms of processing, autophosphorylated on Ser/Thr. Phosphorylated in cytosol under basal conditions and dephosphorylated when membrane-associated. The activity of MAP3K12 can be regulated through its proteasomal degradation. APOE, through a receptor-mediated mechanism, activates MAP3K12 by preventing its proteasomal degradation.

It localises to the cytoplasm. The protein localises to the cell membrane. The enzyme catalyses L-seryl-[protein] + ATP = O-phospho-L-seryl-[protein] + ADP + H(+). The catalysed reaction is L-threonyl-[protein] + ATP = O-phospho-L-threonyl-[protein] + ADP + H(+). In terms of biological role, part of a non-canonical MAPK signaling pathway. Activated by APOE, enhances the AP-1-mediated transcription of APP, via a MAP kinase signal transduction pathway composed of MAP2K7 and MAPK1/ERK2 and MAPK3/ERK1. May be an activator of the JNK/SAPK pathway. This Rattus norvegicus (Rat) protein is Mitogen-activated protein kinase kinase kinase 12 (Map3k12).